The primary structure comprises 161 residues: Type-1 angiotensin II receptor-associated protein (161 aa).

Residues 1–26 (MELPAVNLKVILLVHWLLTTWGCLVF) are Extracellular-facing. A helical membrane pass occupies residues 27–47 (SSSYAWGNFTILALGVWAVAQ). At 48 to 53 (RDSIDA) the chain is on the cytoplasmic side. The helical transmembrane segment at 54–74 (IGMFLGGLVATIFLDIIYISI) threads the bilayer. The Extracellular portion of the chain corresponds to 75 to 86 (FYSSVATGDTGR). Residues 87–107 (FGAGMAILSLLLKPFSCCLVY) form a helical membrane-spanning segment. Residues 108–161 (HMHRERGGELPLRPDFFGPSQEHSAYQTIDSSSDAAADPFASLENKGQAVPRGY) lie on the Cytoplasmic side of the membrane. An interaction with AGTR1 region spans residues 110 to 122 (HRERGGELPLRPD). Phosphoserine is present on serine 127. Threonine 135 is subject to Phosphothreonine. The residue at position 138 (serine 138) is a Phosphoserine.

In terms of assembly, interacts with RACK1, and with the C-terminal region of AGTR1. Ubiquitous but more abundant in kidney, testis and heart.

Its subcellular location is the endoplasmic reticulum membrane. The protein localises to the golgi apparatus membrane. The protein resides in the cytoplasmic vesicle membrane. Its function is as follows. Appears to be a negative regulator of type-1 angiotensin II receptor-mediated signaling by regulating receptor internalization as well as mechanism of receptor desensitization such as phosphorylation. Also induces a decrease in angiotensin II-stimulated transcriptional activity. May play a role of negative regulator in cardiomyocyte hypertrophy induced by angiotensin II through an inhibition of p38 mitogen-activated protein kinase pathway. The chain is Type-1 angiotensin II receptor-associated protein (Agtrap) from Mus musculus (Mouse).